A 329-amino-acid polypeptide reads, in one-letter code: Mas-related G-protein coupled receptor member X2 (329 aa).

Residues 1 to 33 lie on the Extracellular side of the membrane; the sequence is MDPTTPAWGTESTTMDGNDQSLPLLCDKEALIP. A helical membrane pass occupies residues 34 to 54; that stretch reads VFLILFIALVGLVGNGFVLWL. Residues 55–63 lie on the Cytoplasmic side of the membrane; that stretch reads LGFRMSRNA. The helical transmembrane segment at 64–84 threads the bilayer; sequence FSVYVLSLAGADFLFLCFQII. Residues 85 to 96 are Extracellular-facing; sequence NCLVYLRDFFCS. A helical membrane pass occupies residues 97–117; the sequence is ISINFPSXFTTVMTCAYLAGL. Residues 118–144 lie on the Cytoplasmic side of the membrane; the sequence is SMLSTISTERCLSVLWPIWYRCRRPRH. Residues 145–165 traverse the membrane as a helical segment; the sequence is LSAVVCVLLWALSLLLSILEG. Over 166–184 the chain is Extracellular; sequence KFCGFLFSDGDFGWCQIFD. The chain crosses the membrane as a helical span at residues 185-205; sequence FITAAWLIFLFVVLCASSLAL. At 206–228 the chain is on the cytoplasmic side; it reads LVRILCGSRGLPLTRLYLTILLT. The chain crosses the membrane as a helical span at residues 229–249; the sequence is VLVFLLCGLPFGIQWFLILGF. The Extracellular segment spans residues 250–263; that stretch reads WNSDVLLCHIHLVS. A helical transmembrane segment spans residues 264 to 284; the sequence is VVLSSLNSSANPIIYFFVGSF. The Cytoplasmic segment spans residues 285–329; the sequence is RKQWRLQQPILKLAFQRALQDTAEVDHSEGCFPQGTSEMSRSSLV.

This sequence belongs to the G-protein coupled receptor 1 family. Mas subfamily.

The protein resides in the cell membrane. In terms of biological role, mast cell-specific receptor for basic secretagogues, i.e. cationic amphiphilic drugs, as well as endo- or exogenous peptides, consisting of a basic head group and a hydrophobic core. Recognizes and binds small molecules containing a cyclized tetrahydroisoquinoline (THIQ), such as non-steroidal neuromuscular blocking drugs (NMBDs), including tubocurarine and atracurium. In response to these compounds, mediates pseudo-allergic reactions characterized by histamine release, inflammation and airway contraction. The sequence is that of Mas-related G-protein coupled receptor member X2 (MRGPRX2) from Hoolock hoolock (Western hoolock gibbon).